Reading from the N-terminus, the 449-residue chain is C4-dicarboxylate transport protein (449 aa).

8 helical membrane passes run 18–38, 61–81, 93–113, 159–179, 202–222, 244–264, 346–366, and 369–389; these read PFYL…ALLG, MIIS…VAHV, VYFL…AHVV, FVGD…IALA, LVQM…AFTI, SLLF…FSIL, LFLV…AGFI, and AATL…ILGV.

This sequence belongs to the dicarboxylate/amino acid:cation symporter (DAACS) (TC 2.A.23) family.

Its subcellular location is the cell inner membrane. In terms of biological role, responsible for the transport of dicarboxylates such as succinate, fumarate, and malate from the periplasm across the membrane. The polypeptide is C4-dicarboxylate transport protein (Xylella fastidiosa (strain M23)).